Here is a 423-residue protein sequence, read N- to C-terminus: Chitinase 1 (423 aa).

Residues 1–22 (MLSFVKKSIALVAALQAVTALA) form the signal peptide. The propeptide occupies 23–34 (TPISSEAGVEKR). The GH18 domain maps to 38 to 401 (FANAVYFTNW…STSHQGLGSQ (364 aa)). Chitin contacts are provided by residues 102 to 103 (GT) and 129 to 132 (GGWT). Glutamate 171 (proton donor) is an active-site residue. Chitin-binding positions include tyrosine 172, 237 to 240 (MAYD), and tryptophan 378.

The protein belongs to the glycosyl hydrolase 18 family. Chitinase class V subfamily.

The protein localises to the secreted. The catalysed reaction is Random endo-hydrolysis of N-acetyl-beta-D-glucosaminide (1-&gt;4)-beta-linkages in chitin and chitodextrins.. This chain is Chitinase 1 (CHI1), found in Aphanocladium album (Wheat rust fungus).